Consider the following 264-residue polypeptide: MLLTIDVGNTFTVAGVFEGQNLLAEWTVTTDPNRTMDEYGMLFTQLMARAGFSSGQVTAVAIASSVPPLVPTLEWMCQKYFNLKPLVVGPGVRTGMMIRYDNPREVGADRIVGAVAAFDKYGGPLIVVDFSTAIILDAISARGEYLGGVIAPGIVVSADALFQFAAKLPRVELVRPPRALARNTVHAMQSGIIFGFASLVDDLVERMMAELDPEGKGCKVVATGEQAELLAGECATIQYCDPSLTLTGLRIIYERHQAHARGGR.

ATP is bound at residue 6–13 (DVGNTFTV). Substrate is bound by residues Y100 and 107-110 (GADR). Catalysis depends on D109, which acts as the Proton acceptor. D129 contributes to the K(+) binding site. Residue T132 coordinates ATP. T184 lines the substrate pocket.

This sequence belongs to the type III pantothenate kinase family. As to quaternary structure, homodimer. NH4(+) serves as cofactor. Requires K(+) as cofactor.

The protein localises to the cytoplasm. It carries out the reaction (R)-pantothenate + ATP = (R)-4'-phosphopantothenate + ADP + H(+). Its pathway is cofactor biosynthesis; coenzyme A biosynthesis; CoA from (R)-pantothenate: step 1/5. Its function is as follows. Catalyzes the phosphorylation of pantothenate (Pan), the first step in CoA biosynthesis. This Symbiobacterium thermophilum (strain DSM 24528 / JCM 14929 / IAM 14863 / T) protein is Type III pantothenate kinase 2.